The following is a 315-amino-acid chain: Methionyl-tRNA formyltransferase (315 aa).

114–117 contributes to the (6S)-5,6,7,8-tetrahydrofolate binding site; that stretch reads SLLP.

This sequence belongs to the Fmt family.

It carries out the reaction L-methionyl-tRNA(fMet) + (6R)-10-formyltetrahydrofolate = N-formyl-L-methionyl-tRNA(fMet) + (6S)-5,6,7,8-tetrahydrofolate + H(+). Its function is as follows. Attaches a formyl group to the free amino group of methionyl-tRNA(fMet). The formyl group appears to play a dual role in the initiator identity of N-formylmethionyl-tRNA by promoting its recognition by IF2 and preventing the misappropriation of this tRNA by the elongation apparatus. This is Methionyl-tRNA formyltransferase from Corynebacterium glutamicum (strain R).